We begin with the raw amino-acid sequence, 93 residues long: Putative aspartate aminotransferase (93 aa).

It belongs to the class-I pyridoxal-phosphate-dependent aminotransferase family. As to quaternary structure, homodimer. The cofactor is pyridoxal 5'-phosphate.

It is found in the cytoplasm. The enzyme catalyses L-aspartate + 2-oxoglutarate = oxaloacetate + L-glutamate. The sequence is that of Putative aspartate aminotransferase from Methylorubrum extorquens (Methylobacterium dichloromethanicum).